An 837-amino-acid chain; its full sequence is Outer membrane usher protein HifC (837 aa).

Positions 1-26 are cleaved as a signal peptide; sequence MKTKNFPLNKIAFACTLLLANPVAWA. Cys813 and Cys833 are disulfide-bonded.

Belongs to the fimbrial export usher family.

It is found in the cell outer membrane. Essential for piliation. This is Outer membrane usher protein HifC (hifC) from Haemophilus influenzae.